The primary structure comprises 688 residues: Potassium-transporting ATPase ATP-binding subunit (688 aa).

A run of 4 helical transmembrane segments spans residues 37-57 (FIVYIASILTTVLYVFSLFGI), 65-85 (ILFISILLWFTVLFANFAEAI), 219-239 (IALQILLVSLTIIFLVVTASL), and 262-282 (LALLVCLAPTTIGALLSAIGI). Aspartate 313 functions as the 4-aspartylphosphate intermediate in the catalytic mechanism. Residues aspartate 350, glutamate 354, 383–390 (FTAKTRMS), and lysine 401 contribute to the ATP site. Mg(2+) contacts are provided by aspartate 524 and aspartate 528. 3 consecutive transmembrane segments (helical) span residues 586–606 (IANDIAKYFAIIPPLFIGLFP), 622–642 (AILSAVIYNAFIIIFLIPLAL), and 668–688 (IIAPFIAIKGIDILITMLGIV).

It belongs to the cation transport ATPase (P-type) (TC 3.A.3) family. Type IA subfamily. As to quaternary structure, the system is composed of three essential subunits: KdpA, KdpB and KdpC.

The protein resides in the cell membrane. The enzyme catalyses K(+)(out) + ATP + H2O = K(+)(in) + ADP + phosphate + H(+). Its function is as follows. Part of the high-affinity ATP-driven potassium transport (or Kdp) system, which catalyzes the hydrolysis of ATP coupled with the electrogenic transport of potassium into the cytoplasm. This subunit is responsible for energy coupling to the transport system and for the release of the potassium ions to the cytoplasm. The sequence is that of Potassium-transporting ATPase ATP-binding subunit from Clostridium perfringens (strain ATCC 13124 / DSM 756 / JCM 1290 / NCIMB 6125 / NCTC 8237 / Type A).